Here is a 56-residue protein sequence, read N- to C-terminus: Large ribosomal subunit protein bL32 (56 aa).

Residues 1–36 (MAVQQNKKSRSKRGMRRSHDALSTAQLSVDATSGEV) form a disordered region. The segment covering 7 to 16 (KKSRSKRGMR) has biased composition (basic residues). The span at 21 to 31 (ALSTAQLSVDA) shows a compositional bias: polar residues.

It belongs to the bacterial ribosomal protein bL32 family.

The protein is Large ribosomal subunit protein bL32 of Shewanella oneidensis (strain ATCC 700550 / JCM 31522 / CIP 106686 / LMG 19005 / NCIMB 14063 / MR-1).